The primary structure comprises 184 residues: dCTP deaminase (184 aa).

Residues 107–112 (KSTYAR), 131–133 (TLE), Q152, Y166, and Q176 each bind dCTP. E133 acts as the Proton donor/acceptor in catalysis.

The protein belongs to the dCTP deaminase family. In terms of assembly, homotrimer.

It catalyses the reaction dCTP + H2O + H(+) = dUTP + NH4(+). The protein operates within pyrimidine metabolism; dUMP biosynthesis; dUMP from dCTP (dUTP route): step 1/2. Its function is as follows. Catalyzes the deamination of dCTP to dUTP. The protein is dCTP deaminase of Paramagnetospirillum magneticum (strain ATCC 700264 / AMB-1) (Magnetospirillum magneticum).